The sequence spans 397 residues: Acetate kinase (397 aa).

Asparagine 7 lines the Mg(2+) pocket. Lysine 14 contacts ATP. Arginine 90 is a substrate binding site. Catalysis depends on aspartate 147, which acts as the Proton donor/acceptor. Residues 207-211, 282-284, and 330-334 each bind ATP; these read HLGNG, DFR, and GLGEN. Glutamate 383 is a binding site for Mg(2+).

It belongs to the acetokinase family. Homodimer. The cofactor is Mg(2+). Mn(2+) is required as a cofactor.

The protein resides in the cytoplasm. It catalyses the reaction acetate + ATP = acetyl phosphate + ADP. Its pathway is metabolic intermediate biosynthesis; acetyl-CoA biosynthesis; acetyl-CoA from acetate: step 1/2. Its function is as follows. Catalyzes the formation of acetyl phosphate from acetate and ATP. Can also catalyze the reverse reaction. The chain is Acetate kinase from Clostridium botulinum (strain Okra / Type B1).